The sequence spans 210 residues: MELQLAIDLLNKEEATILANKVKDYINIVEIGTPIVINEGLPAVQHLNDNIDGVKVLADLKIMDAADYEVSQAVKFGADIVTILGVAEDASIKAAVDEAHKHGKQLLVDMIAVQDLEKRAKDLDDLGADYIAVHTGYDLQAEGQSPLESLRKVKSVISNSKVAVAGGIKPDTIKDIVAENPDLIIVGGGIANADDPVEAAKQCRAAIEGK.

The protein belongs to the HPS/KGPDC family. HPS subfamily.

The catalysed reaction is D-ribulose 5-phosphate + formaldehyde = D-arabino-hex-3-ulose 6-phosphate. It participates in one-carbon metabolism; formaldehyde assimilation via RuMP pathway; D-fructose 6-phosphate from D-ribulose 5-phosphate and formaldehyde: step 1/2. Its function is as follows. Catalyzes the condensation of ribulose 5-phosphate with formaldehyde to form 3-hexulose 6-phosphate. The polypeptide is 3-hexulose-6-phosphate synthase 1 (Staphylococcus saprophyticus subsp. saprophyticus (strain ATCC 15305 / DSM 20229 / NCIMB 8711 / NCTC 7292 / S-41)).